The chain runs to 47 residues: High light-inducible protein HliC (47 aa).

Topologically, residues 1–14 are cytoplasmic; that stretch reads MNNENSKFGFTAFA. Residues 15-20 carry the Chlorophyll-binding motif motif; sequence ENWNGR. At 15–36 the chain is embedded in the membrane; sequence ENWNGRLAMIGFSSALILELVS. The Lumenal, thylakoid segment spans residues 37–47; that stretch reads GQGVLHFFGIL.

The protein belongs to the Hlip family. Forms heterodimers with both HliA and HliB; these are associated with photosystem II (PSII) assembly intermediates containing CP47 (psbB). In the absence of CP47 (psbB) and HliD, forms a homooligomer in vivo that binds 2 chlorophyll a and 1 beta-carotenoid per monomer. Cofractionates in an approximately 50 kDa fraction the thylakoid membrane with HliD. Associated in vivo with monomeric PSII. Purified in several chlorophyll- and carotenoid-containing complexes, including photosystem II (PSII) assembly intermediate complex RCII* (iD1, D1, D2, PsbE, PsbF, PsbI, Ycf39, Ycf48, HliC and HliD) and the Ycf39-Hlip complex (Ycf39, HliC, HliD and pigments).

The protein localises to the cellular thylakoid membrane. Functionally, forms a number of heteromers involved in photosystem II (PSII) assembly and/or repair under high light stress. Required for binding of chlorophyll and carotenoids by the Ycf39-Hlip complex. The Ycf39-Hlip complex binds D1 at an early stage of PSII assembly along with Ycf48, ribosomes and ChlG, the last enzyme in chlorophyll biosynthesis; it may be involved in chlorophyll reuse and delivery to D1 in the initial stages of PSII assembly. HliA-HliC and HliB-HliC heterodimers bind chlorophyll and carotenoids in a 1:0.6 ratio. Complexes bind mostly beta-carotenoid, but minor amounts of echinenone and beta-crytoxanthin are also detected. The complexes efficiently quench chlorophyll fluorescence, contributing to photoprotection. Deletion of 4 to 5 members of the Hlip family suggests the proteins are involved in regulation of chlorophyll biosynthesis, in stabilization of chlorophyll-binding proteins and/or in reuse of chlorophylls, and may regulate tetrapyrrole biosynthesis. Might bind chlorophyll and/or carotenoids in association with HliD (called the ScpBE pair). In terms of biological role, the Hlips might regulate tetrapyrrole biosynthesis, maybe at the level of aminolevulinic acid synthesis and probably stabilize PSII assembly intermediates. This Synechocystis sp. (strain ATCC 27184 / PCC 6803 / Kazusa) protein is High light-inducible protein HliC (hliC).